The primary structure comprises 185 residues: dCTP deaminase (185 aa).

DCTP-binding positions include 107-112 (KSTYAR), 131-133 (TLE), Gln152, Tyr166, and Gln176. Glu133 functions as the Proton donor/acceptor in the catalytic mechanism.

Belongs to the dCTP deaminase family. Homotrimer.

The catalysed reaction is dCTP + H2O + H(+) = dUTP + NH4(+). The protein operates within pyrimidine metabolism; dUMP biosynthesis; dUMP from dCTP (dUTP route): step 1/2. Catalyzes the deamination of dCTP to dUTP. This Anaplasma marginale (strain Florida) protein is dCTP deaminase.